We begin with the raw amino-acid sequence, 205 residues long: Peptidyl-tRNA hydrolase (205 aa).

Tyr-18 contacts tRNA. Residue His-23 is the Proton acceptor of the active site. Tyr-69, Asn-71, and Asn-117 together coordinate tRNA.

Belongs to the PTH family. In terms of assembly, monomer.

Its subcellular location is the cytoplasm. It carries out the reaction an N-acyl-L-alpha-aminoacyl-tRNA + H2O = an N-acyl-L-amino acid + a tRNA + H(+). Its function is as follows. Hydrolyzes ribosome-free peptidyl-tRNAs (with 1 or more amino acids incorporated), which drop off the ribosome during protein synthesis, or as a result of ribosome stalling. Catalyzes the release of premature peptidyl moieties from peptidyl-tRNA molecules trapped in stalled 50S ribosomal subunits, and thus maintains levels of free tRNAs and 50S ribosomes. This is Peptidyl-tRNA hydrolase from Thermosynechococcus vestitus (strain NIES-2133 / IAM M-273 / BP-1).